The following is a 555-amino-acid chain: Tau-cadinol synthase (555 aa).

Arg-270, Asp-307, Asp-311, Arg-448, and Asp-451 together coordinate (2E,6E)-farnesyl diphosphate. The Mg(2+) site is built by Asp-307 and Asp-311. Positions 307–311 match the DDXXD motif motif; that stretch reads DDTYD. Asp-451, Ser-455, and Glu-459 together coordinate Mg(2+).

This sequence belongs to the terpene synthase family. Mg(2+) serves as cofactor.

The enzyme catalyses (2E,6E)-farnesyl diphosphate + H2O = tau-cadinol + diphosphate. The catalysed reaction is (2E,6E)-farnesyl diphosphate = (+)-gamma-cadinene + diphosphate. It functions in the pathway secondary metabolite biosynthesis; terpenoid biosynthesis. Sesquiterpene synthase that catalyzes the formation of sesquiterpenes and sesquiterpenoid alcohols. Converts farnesyl diphosphate (FPP) to tau-cadinol. Converts FPP to gamma-cadinene. Tau-cadinol is the major product. The sequence is that of Tau-cadinol synthase from Lavandula angustifolia (Lavender).